A 539-amino-acid chain; its full sequence is GMP synthase [glutamine-hydrolyzing] (539 aa).

In terms of domain architecture, Glutamine amidotransferase type-1 spans 4-202; the sequence is KVLILDFGSQ…VLEIAGAKPD (199 aa). Cys81 serves as the catalytic Nucleophile. Catalysis depends on residues His176 and Glu178. One can recognise a GMPS ATP-PPase domain in the interval 203–395; it reads WVMRDHIDEA…LGLPHEMVYR (193 aa). 230 to 236 provides a ligand contact to ATP; the sequence is SGGVDSS.

In terms of assembly, homodimer.

It carries out the reaction XMP + L-glutamine + ATP + H2O = GMP + L-glutamate + AMP + diphosphate + 2 H(+). It functions in the pathway purine metabolism; GMP biosynthesis; GMP from XMP (L-Gln route): step 1/1. Catalyzes the synthesis of GMP from XMP. This Ralstonia pickettii (strain 12J) protein is GMP synthase [glutamine-hydrolyzing].